A 1154-amino-acid polypeptide reads, in one-letter code: Voltage-dependent calcium channel subunit alpha-2/delta-2 (1154 aa).

Positions 1–18 (MAVPARTCGASWPGPVRT) are cleaved as a signal peptide. Residues 1–37 (MAVPARTCGASWPGPVRTARPWPGRGPRPCPDPRGPA) form a disordered region. The Extracellular segment spans residues 19-1116 (ARPWPGRGPR…TEDTSDCGRG (1098 aa)). Residues 24-34 (GRGPRPCPDPR) show a composition bias toward pro residues. N-linked (GlcNAc...) asparagine glycosylation is present at N205. Residues 294 to 472 (DMVIIVDVSG…INTQEYLDVL (179 aa)) enclose the VWFA domain. Residues D300, S302, and S304 each coordinate a divalent metal cation. The MIDAS-like motif motif lies at 300–304 (DVSGS). N-linked (GlcNAc...) asparagine glycosylation is found at N389, N421, N510, N543, N627, and N864. C446 and C1101 are joined by a disulfide. The region spanning 488 to 577 (WTNVYEDALG…KPQTTNFREP (90 aa)) is the Cache domain. The chain crosses the membrane as a helical span at residues 1117–1137 (ASFPPSLGVLVSLQLLLLLGL). Topologically, residues 1138 to 1154 (PPRPQPQVHSFAASRHL) are cytoplasmic.

This sequence belongs to the calcium channel subunit alpha-2/delta family. As to quaternary structure, dimer formed of alpha-2-2 and delta-2 chains; disulfide-linked. Voltage-dependent calcium channels are multisubunit complexes, consisting of alpha-1 (CACNA1), alpha-2 (CACNA2D), beta (CACNB) and delta (CACNA2D) subunits in a 1:1:1:1 ratio. In terms of processing, N-glycosylated. May be proteolytically processed into subunits alpha-2-2 and delta-2 that are disulfide-linked. It is however unclear whether such cleavage really takes place in vivo and has a functional role. According to PubMed:11306709, it is processed, at least in vitro, while according to PubMed:17052222, it is only poorly processed in vivo. As to expression, predominantly expressed in brain in a restricted pattern. Also expressed at lower level in kidney and testis Not expressed in lung at any moment of development. In brain, it localizes to sections of P21 brain. Expressed at high level in the cerebellum, with moderate levels in medulla, pons, and striatum. Also expressed in cortex, hippocampus, habenula and nucleus reticularis thalami (nRT). Strongly expressed in cerebellar Purkinje cells.

Its subcellular location is the membrane. In terms of biological role, the alpha-2/delta subunit of voltage-dependent calcium channels regulates calcium current density and activation/inactivation kinetics of the calcium channel. Acts as a regulatory subunit for P/Q-type calcium channel (CACNA1A), N-type (CACNA1B), L-type (CACNA1C OR CACNA1D) and possibly T-type (CACNA1G). The sequence is that of Voltage-dependent calcium channel subunit alpha-2/delta-2 (Cacna2d2) from Mus musculus (Mouse).